The primary structure comprises 334 residues: Ornithine carbamoyltransferase (334 aa).

Carbamoyl phosphate contacts are provided by residues 57–60 (STRT), Gln84, Arg108, and 135–138 (HPTQ). Residues Asn169, Asp233, and 237–238 (SM) each bind L-ornithine. Carbamoyl phosphate-binding positions include 275-276 (CL) and Arg320.

This sequence belongs to the aspartate/ornithine carbamoyltransferase superfamily. OTCase family.

It localises to the cytoplasm. The catalysed reaction is carbamoyl phosphate + L-ornithine = L-citrulline + phosphate + H(+). It functions in the pathway amino-acid biosynthesis; L-arginine biosynthesis; L-arginine from L-ornithine and carbamoyl phosphate: step 1/3. In terms of biological role, reversibly catalyzes the transfer of the carbamoyl group from carbamoyl phosphate (CP) to the N(epsilon) atom of ornithine (ORN) to produce L-citrulline. The protein is Ornithine carbamoyltransferase of Aliivibrio fischeri (strain ATCC 700601 / ES114) (Vibrio fischeri).